Reading from the N-terminus, the 411-residue chain is Aspartokinase (411 aa).

Lys-7–Gly-10 provides a ligand contact to ATP. Substrate is bound at residue Arg-25–Lys-30. ATP is bound at residue Ser-41. Residues Thr-47–Glu-49, Glu-74, Leu-125–Asn-126, Arg-150–Ser-153, and Ser-153 contribute to the substrate site. ATP-binding positions include Thr-173–Asp-174 and Phe-179–Arg-184. 2 ACT domains span residues Val-264–Gly-338 and Ile-344–Arg-411. Substrate contacts are provided by residues Asn-289–Asp-291, Gln-295, Val-355–Ala-356, Gln-369–Val-370, and Ser-376–Glu-377.

It belongs to the aspartokinase family. Tetramer consisting of 2 isoforms Alpha (catalytic and regulation) and of a homodimer of 2 isoforms Beta (regulation).

It carries out the reaction L-aspartate + ATP = 4-phospho-L-aspartate + ADP. Its pathway is amino-acid biosynthesis; L-lysine biosynthesis via DAP pathway; (S)-tetrahydrodipicolinate from L-aspartate: step 1/4. It participates in amino-acid biosynthesis; L-methionine biosynthesis via de novo pathway; L-homoserine from L-aspartate: step 1/3. It functions in the pathway amino-acid biosynthesis; L-threonine biosynthesis; L-threonine from L-aspartate: step 1/5. With respect to regulation, lysine-sensitive. Its function is as follows. Catalyzes the phosphorylation of the beta-carboxyl group of aspartic acid with ATP to yield 4-phospho-L-aspartate, which is involved in the branched biosynthetic pathway leading to the biosynthesis of amino acids threonine, isoleucine and methionine. This Bacillus sp. (strain MGA3) protein is Aspartokinase (lysC).